We begin with the raw amino-acid sequence, 459 residues long: Exodeoxyribonuclease 7 large subunit (459 aa).

Belongs to the XseA family. Heterooligomer composed of large and small subunits.

The protein resides in the cytoplasm. The catalysed reaction is Exonucleolytic cleavage in either 5'- to 3'- or 3'- to 5'-direction to yield nucleoside 5'-phosphates.. Functionally, bidirectionally degrades single-stranded DNA into large acid-insoluble oligonucleotides, which are then degraded further into small acid-soluble oligonucleotides. In Pseudomonas putida (strain ATCC 47054 / DSM 6125 / CFBP 8728 / NCIMB 11950 / KT2440), this protein is Exodeoxyribonuclease 7 large subunit.